The chain runs to 473 residues: Glycogen synthase (473 aa).

Lys-15 lines the ADP-alpha-D-glucose pocket.

It belongs to the glycosyltransferase 1 family. Bacterial/plant glycogen synthase subfamily.

The enzyme catalyses [(1-&gt;4)-alpha-D-glucosyl](n) + ADP-alpha-D-glucose = [(1-&gt;4)-alpha-D-glucosyl](n+1) + ADP + H(+). Its pathway is glycan biosynthesis; glycogen biosynthesis. In terms of biological role, synthesizes alpha-1,4-glucan chains using ADP-glucose. The polypeptide is Glycogen synthase (Flavobacterium johnsoniae (strain ATCC 17061 / DSM 2064 / JCM 8514 / BCRC 14874 / CCUG 350202 / NBRC 14942 / NCIMB 11054 / UW101) (Cytophaga johnsonae)).